Consider the following 649-residue polypeptide: Leucine-rich repeat transmembrane protein FLRT3 (649 aa).

An N-terminal signal peptide occupies residues 1 to 28 (MISPAWSIFLIGTKIGLFLQVAPLSVMA). In terms of domain architecture, LRRNT spans 29 to 58 (KSCPSVCRCDAGFIYCNDRFLTSIPTGIPE). Topologically, residues 29-528 (KSCPSVCRCD…KEPYKNPNLP (500 aa)) are extracellular. Cystine bridges form between cysteine 31–cysteine 37 and cysteine 35–cysteine 44. Positions 38 to 67 (DAGFIYCNDRFLTSIPTGIPEDATTLYLQN) are interaction with ADGRL3. LRR repeat units follow at residues 59–80 (DATTLYLQNNQINNAGIPSDLK), 84–104 (KVERIYLYHNSLDEFPTNLPK), 105–126 (YVKELHLQENNIRTITYDSLSK), 129–150 (YLEELRLDDNSVSAVSIEEGAF), 155–176 (YLRLLFLSRNHLSTIPWGLPRT), 177–197 (IEELRLDDNRIPTISSPSLQG), 200–220 (SLKRLVLDGNLLNNHGLGDKV), 226–247 (NLTELSLVRNSLTAAPVNLPGT), 248–269 (NLRKLYLQDNHINRVPPNAFSY), and 272–293 (QLYRLDMSNNNLSNLPQGIFDD). Asparagine 226 carries an N-linked (GlcNAc...) asparagine glycan. N-linked (GlcNAc...) asparagine glycosylation is found at asparagine 282 and asparagine 296. The region spanning 305–357 (NPWYCGCKMKWVRDWLQSLPVKVNVRGLMCQAPEKVRGMAIKDLNAELFDCKD) is the LRRCT domain. The cysteines at positions 309 and 334 are disulfide-linked. Residues 385-407 (VTKQPDIKNPKLTKDHQTTGSPS) form a disordered region. Over residues 389-401 (PDIKNPKLTKDHQ) the composition is skewed to basic and acidic residues. In terms of domain architecture, Fibronectin type-III spans 409–504 (KTITITVKSV…VCIETETAPL (96 aa)). Residues 529–549 (LAAIIGGAVALVTIALLALVC) traverse the membrane as a helical segment. The Cytoplasmic segment spans residues 550 to 649 (WYVHRNGSLF…GIPDSDHSHS (100 aa)). Residues 622–649 (LYKNNHSESSSNRSYRDSGIPDSDHSHS) form a disordered region.

As to quaternary structure, monomer and homodimer. Self-associates (via leucine-rich repeats), giving rise to homooligomers. Interacts with FGFR1. Interacts (via extracellular domain) with ADGRL1/LPHN1 and LPHN2 (via olfactomedin-like domain). Interacts (via extracellular domain) with ADGRL3 (via olfactomedin-like domain); the interaction is direct. Interacts (via extracellular domain) with UNC5B and UNC5D (via extracellular domain); the interaction is direct. Identified in complexes composed of FLRT3, ADGRL3 and UNC5B, respectively FLRT3, ADGRL3 and UNC5D. May also interact (via extracellular domain) with UNC5A and UNC5C. Interacts (via cytoplasmic domain) with ROBO1. Post-translationally, N-glycosylated. In terms of processing, proteolytic cleavage in the juxtamembrane region gives rise to a soluble ectodomain. Cleavage is probably effected by a metalloprotease.

It is found in the cell membrane. Its subcellular location is the presynaptic cell membrane. The protein resides in the endoplasmic reticulum membrane. The protein localises to the cell junction. It localises to the focal adhesion. It is found in the secreted. Its subcellular location is the cell projection. The protein resides in the axon. The protein localises to the growth cone membrane. Functionally, functions in cell-cell adhesion, cell migration and axon guidance, exerting an attractive or repulsive role depending on its interaction partners. Plays a role in the spatial organization of brain neurons. Plays a role in vascular development in the retina. Plays a role in cell-cell adhesion via its interaction with ADGRL3 and probably also other latrophilins that are expressed at the surface of adjacent cells. Interaction with the intracellular domain of ROBO1 mediates axon attraction towards cells expressing NTN1. Mediates axon growth cone collapse and plays a repulsive role in neuron guidance via its interaction with UNC5B, and possibly also other UNC-5 family members. Promotes neurite outgrowth (in vitro). Mediates cell-cell contacts that promote an increase both in neurite number and in neurite length. Plays a role in the regulation of the density of glutamaergic synapses. Plays a role in fibroblast growth factor-mediated signaling cascades. Required for normal morphogenesis during embryonic development, but not for normal embryonic patterning. Required for normal ventral closure, headfold fusion and definitive endoderm migration during embryonic development. Required for the formation of a normal basement membrane and the maintenance of a normal anterior visceral endoderm during embryonic development. This Pongo abelii (Sumatran orangutan) protein is Leucine-rich repeat transmembrane protein FLRT3 (FLRT3).